Consider the following 338-residue polypeptide: Trans-enoyl reductase fsr4 (338 aa).

Residue 65 to 68 (KDWK) coordinates NADP(+). 147–153 (AAFTAAC) contributes to the substrate binding site. NADP(+) contacts are provided by residues 182–185 (SSAV), 205–208 (AGRA), Tyr227, and 277–278 (II).

It belongs to the zinc-containing alcohol dehydrogenase family.

In terms of biological role, trans-enoyl reductase; part of the gene cluster that mediates the biosynthesis of fusarubins, highly pigmented naphthoquinones responsible for the coloration of the fruiting bodies. The non-reducing polyketide synthase FSR1 is responsible for the condensation of seven acetyl-CoA units to yield a haptaketide. After rings A and B are formed by aldol-type cyclization, the PKS-derived product is released as 6-O-demethylfusarubinaldehyde. Then, two hydroxyl groups at C-5 and C-10 are incorporated by FSR3, and simultaneously hydroxyl groups at C-6 and C-8 are methylated by FSR2. The aldehyde is, on the one hand, reduced by FSR3 to 8-O-methylfusarubin alcohol, which equilibrates mainly with 8-O-methylfusarubin and only small amounts of 8-O-methylnectriafurone. On the other hand, the aldehyde can be oxidized to form 8-O-methylfusarubinic acid, a reaction driven by FSR3 equilibrating with 8-O-methylfusarubinlactone, finally resulting in 8-O-methylanhydrofusarubinlactol after a further reduction step and loss of water. 8-O-Methylfusarubinic acid can also undergo decarboxylation, resulting in 8-O-methyl-13-hydroxynorjavanicin after another hydroxylation step at C-13. Both steps are most likely also accomplished by FSR3. No enzymatic function has been determined so far for either FSR4 and FSR5. Their deletion does not alter the product spectrum, but the possibility that they catalyze specific enzymatic steps during perithecium development cannot be ruled out. FSR4 might possess a regulatory function in the biosynthesis of fusarubins. This Gibberella fujikuroi (strain CBS 195.34 / IMI 58289 / NRRL A-6831) (Bakanae and foot rot disease fungus) protein is Trans-enoyl reductase fsr4.